The chain runs to 273 residues: Suppressor protein STM1 (273 aa).

The tract at residues 1-153 is disordered; sequence MSNPFDLLGN…PKTAQLSLQD (153 aa). An N-acetylserine modification is found at Ser-2. Phosphoserine; by MTOR is present on residues Ser-32, Ser-41, and Ser-45. Residue Lys-46 forms a Glycyl lysine isopeptide (Lys-Gly) (interchain with G-Cter in ubiquitin) linkage. A phosphoserine; by MTOR mark is found at Ser-55 and Ser-73. Ser-55 carries the post-translational modification Phosphoserine. Composition is skewed to basic and acidic residues over residues 60–77, 89–104, and 111–124; these read AIRD…KDVT, RATD…DTKK, and GDDK…KEAQ. At Ser-118 the chain carries Phosphoserine. Glycyl lysine isopeptide (Lys-Gly) (interchain with G-Cter in ubiquitin) cross-links involve residues Lys-121 and Lys-171. Thr-181 is modified (phosphothreonine; by MTOR). Lys-184 is covalently cross-linked (Glycyl lysine isopeptide (Lys-Gly) (interchain with G-Cter in ubiquitin)). Residue Thr-218 is modified to Phosphothreonine; by MTOR. The tract at residues 219–273 is disordered; the sequence is RKNFGDRNNNSRNNFNNRRGGRGARKGNNTANATNSANTVQKNRNIDVSNLPSLA. 2 stretches are compositionally biased toward low complexity: residues 224–236 and 244–257; these read DRNN…FNNR and KGNN…SANT. Ser-229 is subject to Phosphoserine. Positions 258 to 273 are enriched in polar residues; sequence VQKNRNIDVSNLPSLA.

This sequence belongs to the SERBP1-HABP4 family. Associates with mature 80S ribosomes. Binds to the head domain of the 40S ribosomal subunit and prevents mRNA binding by inserting its alpha-helix domain towards the mRNA entry tunnel at the decoding site, where it blocks the binding of tRNA and mRNA at the A- and P-sites. Interacts with EFT1; interaction sequesters EFT1 at the A-site of the ribosome, thereby blocking the interaction sites of the mRNA-tRNA complex, promoting ribosome stabilization and hibernation. Interacts with CDC13. Associates with the telomere-proximal Y' element. Phosphorylation by TORC1 upon nutrient replenishment inhibits STM1 and causes its release from dormant ribosomes.

The protein localises to the cytoplasm. It is found in the nucleus. The protein resides in the perinuclear region. Ribosome preservation factor that protect a small pool of nontranslating, vacant ribosomes in cells under nutrient starvation conditions. Under nutrient-limiting conditions, cells reduce ribosome biogenesis and degrade ribosomes via autophagy (ribophagy) or proteasomal degradation. To avoid excessive degradation during starvation, STM1 binds to and protects 80S ribosomes from proteasomal degradation. Under nutrient-sufficient conditions, TORC1 phosphorylates and inhibits STM1 to prevent formation of dormant 80S ribosomes. Acts as an inhibitor of mRNA translation by promoting ribosome hibernation: clamps the two ribosomal subunits, thereby preventing their dissociation, and inhibits translation by excluding mRNA-binding. Acts via its association with eEF2 (EFT1), promoting ribosome stabilization and storage in an inactive state. May also repress translation by preventing association of eEF3 (YEF3 and HEF3) with ribosomes. Binds specifically G4 quadruplex (these are four-stranded right-handed helices, stabilized by guanine base quartets) and purine motif triplex (characterized by a third, antiparallel purine-rich DNA strand located within the major groove of a homopurine stretch of duplex DNA) nucleic acid structures. These structures may be present at telomeres or in rRNAs. Acts with CDC13 to control telomere length homeostasis. Involved in the control of the apoptosis-like cell death. The polypeptide is Suppressor protein STM1 (Saccharomyces cerevisiae (strain ATCC 204508 / S288c) (Baker's yeast)).